The primary structure comprises 444 residues: Radical S-adenosyl methionine domain-containing protein 1, mitochondrial (444 aa).

The transit peptide at 1-39 (MSTRVLTLTLLKKRHLMQCFWSTVGSVHLRSIASDKIPS) directs the protein to the mitochondrion. In terms of domain architecture, Radical SAM core spans 40–274 (HAVEASLYVH…CRVLEESGFH (235 aa)). Tyr47 provides a ligand contact to S-adenosyl-L-methionine. 3 residues coordinate [4Fe-4S] cluster: Cys53, Cys57, and Cys60. Residues Gly102, 103-104 (GT), Glu135, Gln162, Arg174, and Asp199 each bind S-adenosyl-L-methionine.

Belongs to the anaerobic coproporphyrinogen-III oxidase family. HemW subfamily. It depends on [4Fe-4S] cluster as a cofactor.

The protein localises to the mitochondrion. Its function is as follows. May be a heme chaperone, appears to bind heme. Homologous bacterial proteins do not have oxygen-independent coproporphyrinogen-III oxidase activity. Binds 1 [4Fe-4S] cluster. The cluster is coordinated with 3 cysteines and an exchangeable S-adenosyl-L-methionine. This Danio rerio (Zebrafish) protein is Radical S-adenosyl methionine domain-containing protein 1, mitochondrial (rsad1).